Here is a 141-residue protein sequence, read N- to C-terminus: MAMTVHVDIVSAEEQIFSGLAEFVALPGEAGELGILPGHMPLMTRIKPGAVRVKRPDQAEEELVFVAGGILEVQPGLVTVLADTAIRGKDLDEAKALEAKRIAEEALKNQSTEIDYAKAQAELAEAIAQIAAIQKLRKRGH.

It belongs to the ATPase epsilon chain family. In terms of assembly, F-type ATPases have 2 components, CF(1) - the catalytic core - and CF(0) - the membrane proton channel. CF(1) has five subunits: alpha(3), beta(3), gamma(1), delta(1), epsilon(1). CF(0) has three main subunits: a, b and c.

The protein localises to the cell inner membrane. Functionally, produces ATP from ADP in the presence of a proton gradient across the membrane. This is ATP synthase epsilon chain from Aromatoleum aromaticum (strain DSM 19018 / LMG 30748 / EbN1) (Azoarcus sp. (strain EbN1)).